The sequence spans 116 residues: Large ribosomal subunit protein bL20 (116 aa).

This sequence belongs to the bacterial ribosomal protein bL20 family.

Binds directly to 23S ribosomal RNA and is necessary for the in vitro assembly process of the 50S ribosomal subunit. It is not involved in the protein synthesizing functions of that subunit. This chain is Large ribosomal subunit protein bL20, found in Helicobacter pylori (strain Shi470).